Reading from the N-terminus, the 435-residue chain is GTPase Obg (435 aa).

The 159-residue stretch at 1–159 (MAFIDKCKIV…IEVVLELKTI (159 aa)) folds into the Obg domain. One can recognise an OBG-type G domain in the interval 160–329 (ADIGIIGLPN…MLDDVIKIYF (170 aa)). Residues 166–173 (GLPNAGKS), 191–195 (FTTLN), 212–215 (DIPG), 282–285 (NKID), and 310–312 (SAL) contribute to the GTP site. 2 residues coordinate Mg(2+): Ser-173 and Thr-193. The OCT domain occupies 355–435 (TPKNKELDKT…IYDITLEFEE (81 aa)).

The protein belongs to the TRAFAC class OBG-HflX-like GTPase superfamily. OBG GTPase family. In terms of assembly, monomer. Mg(2+) serves as cofactor.

It localises to the cytoplasm. Functionally, an essential GTPase which binds GTP, GDP and possibly (p)ppGpp with moderate affinity, with high nucleotide exchange rates and a fairly low GTP hydrolysis rate. Plays a role in control of the cell cycle, stress response, ribosome biogenesis and in those bacteria that undergo differentiation, in morphogenesis control. The polypeptide is GTPase Obg (Ureaplasma urealyticum serovar 10 (strain ATCC 33699 / Western)).